Reading from the N-terminus, the 251-residue chain is Imidazole glycerol phosphate synthase subunit HisF (251 aa).

Active-site residues include Asp11 and Asp130.

It belongs to the HisA/HisF family. Heterodimer of HisH and HisF.

The protein localises to the cytoplasm. It catalyses the reaction 5-[(5-phospho-1-deoxy-D-ribulos-1-ylimino)methylamino]-1-(5-phospho-beta-D-ribosyl)imidazole-4-carboxamide + L-glutamine = D-erythro-1-(imidazol-4-yl)glycerol 3-phosphate + 5-amino-1-(5-phospho-beta-D-ribosyl)imidazole-4-carboxamide + L-glutamate + H(+). Its pathway is amino-acid biosynthesis; L-histidine biosynthesis; L-histidine from 5-phospho-alpha-D-ribose 1-diphosphate: step 5/9. Functionally, IGPS catalyzes the conversion of PRFAR and glutamine to IGP, AICAR and glutamate. The HisF subunit catalyzes the cyclization activity that produces IGP and AICAR from PRFAR using the ammonia provided by the HisH subunit. The chain is Imidazole glycerol phosphate synthase subunit HisF from Chloroherpeton thalassium (strain ATCC 35110 / GB-78).